The chain runs to 444 residues: Chromosome partition protein MukF (444 aa).

Residues 212–240 (LDETSGNLRELQDTLNAAGDKLQAQLLRI) are leucine-zipper.

This sequence belongs to the MukF family. Interacts, and probably forms a ternary complex, with MukE and MukB via its C-terminal region. The complex formation is stimulated by calcium or magnesium. It is required for an interaction between MukE and MukB.

Its subcellular location is the cytoplasm. The protein localises to the nucleoid. In terms of biological role, involved in chromosome condensation, segregation and cell cycle progression. May participate in facilitating chromosome segregation by condensation DNA from both sides of a centrally located replisome during cell division. Not required for mini-F plasmid partitioning. Probably acts via its interaction with MukB and MukE. Overexpression results in anucleate cells. It has a calcium binding activity. In Haemophilus influenzae (strain PittGG), this protein is Chromosome partition protein MukF.